A 1168-amino-acid chain; its full sequence is Transcription-repair-coupling factor (1168 aa).

Residues 633 to 794 enclose the Helicase ATP-binding domain; sequence DMQKSRPMDR…MLGVRDLSVI (162 aa). 646-653 is an ATP binding site; that stretch reads GDVGYGKT. Residues 747–750 carry the DEEQ box motif; the sequence is DEEQ. One can recognise a Helicase C-terminal domain in the interval 808–969; sequence VLEQNMSFIK…GFKIAMRDLN (162 aa).

In the N-terminal section; belongs to the UvrB family. The protein in the C-terminal section; belongs to the helicase family. RecG subfamily.

It is found in the cytoplasm. Couples transcription and DNA repair by recognizing RNA polymerase (RNAP) stalled at DNA lesions. Mediates ATP-dependent release of RNAP and its truncated transcript from the DNA, and recruitment of nucleotide excision repair machinery to the damaged site. The sequence is that of Transcription-repair-coupling factor from Staphylococcus aureus (strain MRSA252).